A 403-amino-acid polypeptide reads, in one-letter code: MAVKKLADLLKEGVEGRHVLVRADLNVPLKDKVITDPGRIDASLPTIKALTEAGARVIVAAHLGRPKSPQDTQFSLAPVAEALSQRLDQYVALASDVSGEDAHERANGLNDGDVLLLENVRFDPREKSKNDAEREELASELAALTGDNGAFVSDGFGVVHRKQASVYDVAKKLPAYVGYLVEKELEQLSKCTDDPQHPYAVCLGGSKVSDKLGVIKALAPKVDTLIIGGGMCYTFLKAKGYGVGDSLLEESMIDECKNLLSEYSDKIVLPSDIVVGKEFDANTEHKTVSADGIEDGWMGLDTGAESIKTFGERLNGAKTIFWNGPVGVFEFEAFANGTKGLAEAIAEATKNGAFSVIGGGDSASAVRNLGFADEAFSHISTGGGASLELIEGKTLPGVAVLDR.

Substrate-binding positions include 24 to 26, arginine 39, 62 to 65, arginine 121, and arginine 161; these read DLN and HLGR. Residues lysine 211, glycine 299, glutamate 330, and 359-362 each bind ATP; that span reads GGDS.

This sequence belongs to the phosphoglycerate kinase family. In terms of assembly, monomer.

The protein localises to the cytoplasm. The enzyme catalyses (2R)-3-phosphoglycerate + ATP = (2R)-3-phospho-glyceroyl phosphate + ADP. It functions in the pathway carbohydrate degradation; glycolysis; pyruvate from D-glyceraldehyde 3-phosphate: step 2/5. The chain is Phosphoglycerate kinase from Corynebacterium kroppenstedtii (strain DSM 44385 / JCM 11950 / CIP 105744 / CCUG 35717).